Reading from the N-terminus, the 517-residue chain is Facilitated trehalose transporter Tret1 (517 aa).

At 1–56 (MWIEIPECYEVLRNVFSKFRRHSLTAAMVKLLMRADTHVSFTVPAEEPVAKCTFSQ) the chain is on the cytoplasmic side. Residues 57–77 (VLAALSVSLGSMVVGFSSAYT) form a helical membrane-spanning segment. The Extracellular segment spans residues 78–100 (SPALVSMKDRNITSFEVTDQSGS). N-linked (GlcNAc...) asparagine glycosylation is present at Asn-88. The chain crosses the membrane as a helical span at residues 101–121 (WVGGIMPLAGLVGGILGGPLI). At 122-135 (EYLGRKNTILATAT) the chain is on the cytoplasmic side. A helical transmembrane segment spans residues 136-156 (PFIISWLLIACATHVAMVLVG). Topologically, residues 157–158 (RA) are extracellular. The helical transmembrane segment at 159–179 (LSGFSVGVASLSLPVYLGETV) threads the bilayer. The Cytoplasmic portion of the chain corresponds to 180–184 (QPEVR). The chain crosses the membrane as a helical span at residues 185-205 (GTLGLLPTAFGNIGILLCFVA). The Extracellular segment spans residues 206 to 212 (GNYMDWS). The chain crosses the membrane as a helical span at residues 213–233 (ELAFLGATLPVPFLILMFLIP). Residues 234 to 296 (ETPRWYVSRG…DLLKKTNLKP (63 aa)) are Cytoplasmic-facing. Residues 297–317 (LLISLGLMFFQQLSGINAVIF) traverse the membrane as a helical segment. Topologically, residues 318–333 (YTVQIFQDAGSTIDEN) are extracellular. The chain crosses the membrane as a helical span at residues 334–354 (LCTIIVGVVNFIATFIATLLI). Over 355–360 (DRLGRK) the chain is Cytoplasmic. A helical transmembrane segment spans residues 361 to 381 (MLLYISDIAMIITLMTLGGFF). The Extracellular segment spans residues 382-392 (YVKNNGGDVSH). Residues 393-413 (IGWLPLASFVIFVLGFSLGFG) traverse the membrane as a helical segment. The Cytoplasmic segment spans residues 414–437 (PIPWLMMGEILPGKIRGSAASVAT). The chain crosses the membrane as a helical span at residues 438–458 (AFNWSCTFVVTKTFADIIASI). Residues 459 to 461 (GTH) are Extracellular-facing. A helical membrane pass occupies residues 462–482 (GAFWMFGSVCVVGLVFVIMYV). At 483-517 (PETQGKSLEDIERKMCGRVRRMSSVANIKPLSFNM) the chain is on the cytoplasmic side.

The protein belongs to the major facilitator superfamily. Sugar transporter (TC 2.A.1.1) family. Trehalose transporter subfamily.

It localises to the cell membrane. Its function is as follows. High-capacity facilitative transporter for trehalose. Does not transport maltose, sucrose or lactose. Mediates the bidirectional transfer of trehalose. Responsible for the transport of trehalose synthesized in the fat body and the incorporation of trehalose into other tissues that require a carbon source, thereby regulating trehalose levels in the hemolymph. This is Facilitated trehalose transporter Tret1 from Culex quinquefasciatus (Southern house mosquito).